A 354-amino-acid polypeptide reads, in one-letter code: Probable cinnamyl alcohol dehydrogenase 1 (354 aa).

Cysteine 47 provides a ligand contact to Zn(2+). Serine 49 is an NADP(+) binding site. The Zn(2+) site is built by histidine 69, glutamate 70, cysteine 100, cysteine 103, cysteine 106, cysteine 114, and cysteine 163. NADP(+)-binding positions include threonine 167, glycine 188 to glycine 193, serine 211 to lysine 216, threonine 251, glycine 275, and serine 296 to isoleucine 298.

Belongs to the zinc-containing alcohol dehydrogenase family. In terms of assembly, homodimer. Zn(2+) serves as cofactor.

It catalyses the reaction (E)-cinnamyl alcohol + NADP(+) = (E)-cinnamaldehyde + NADPH + H(+). The enzyme catalyses (E)-coniferol + NADP(+) = (E)-coniferaldehyde + NADPH + H(+). The catalysed reaction is (E)-sinapyl alcohol + NADP(+) = (E)-sinapaldehyde + NADPH + H(+). It carries out the reaction (E)-4-coumaroyl alcohol + NADP(+) = (E)-4-coumaraldehyde + NADPH + H(+). It catalyses the reaction (E)-caffeyl alcohol + NADP(+) = (E)-caffeyl aldehyde + NADPH + H(+). The protein operates within aromatic compound metabolism; phenylpropanoid biosynthesis. Involved in lignin biosynthesis. Catalyzes the final step specific for the production of lignin monomers. Catalyzes the NADPH-dependent reduction of coniferaldehyde, 5-hydroxyconiferaldehyde, sinapaldehyde, 4-coumaraldehyde and caffeyl aldehyde to their respective alcohols. This Eucalyptus gunnii (Cider gum) protein is Probable cinnamyl alcohol dehydrogenase 1 (CAD1).